Consider the following 204-residue polypeptide: Holliday junction branch migration complex subunit RuvA (204 aa).

Residues 1-63 (MIGWLQGRVL…EDGQFLYGFS (63 aa)) form a domain I region. Residues 64–142 (SFLQRQLFRE…KNDLFLCDES (79 aa)) form a domain II region. A flexible linker region spans residues 143-152 (ESSRAPIALS). Residues 152–204 (SASEEAIQALIALELAPAEAELWVKKAQKTLAEDADSAALIKTAFALRLQGAK) are domain III.

This sequence belongs to the RuvA family. In terms of assembly, homotetramer. Forms an RuvA(8)-RuvB(12)-Holliday junction (HJ) complex. HJ DNA is sandwiched between 2 RuvA tetramers; dsDNA enters through RuvA and exits via RuvB. An RuvB hexamer assembles on each DNA strand where it exits the tetramer. Each RuvB hexamer is contacted by two RuvA subunits (via domain III) on 2 adjacent RuvB subunits; this complex drives branch migration. In the full resolvosome a probable DNA-RuvA(4)-RuvB(12)-RuvC(2) complex forms which resolves the HJ.

It localises to the cytoplasm. The RuvA-RuvB-RuvC complex processes Holliday junction (HJ) DNA during genetic recombination and DNA repair, while the RuvA-RuvB complex plays an important role in the rescue of blocked DNA replication forks via replication fork reversal (RFR). RuvA specifically binds to HJ cruciform DNA, conferring on it an open structure. The RuvB hexamer acts as an ATP-dependent pump, pulling dsDNA into and through the RuvAB complex. HJ branch migration allows RuvC to scan DNA until it finds its consensus sequence, where it cleaves and resolves the cruciform DNA. The chain is Holliday junction branch migration complex subunit RuvA from Dichelobacter nodosus (strain VCS1703A).